Consider the following 99-residue polypeptide: Prostate and testis expressed protein 4 (99 aa).

An N-terminal signal peptide occupies residues 1–23 (MNSVTKISTLLIVILSFLCFVEG). Residues 24-99 (LICNSCEKSR…CCEKNLCNSF (76 aa)) form the UPAR/Ly6 domain. 4 disulfide bridges follow: C26–C52, C29–C37, C44–C70, and C74–C90.

As to expression, expressed in prostate, testis, eye, kidney and skeletal muscle. Expressed in the dorsal lobe of prostate. Not expressed in the ventral lobe of prostate.

It is found in the secreted. Its function is as follows. Enhances sperm motility. Binds to calmodulin and inhibits calcium transport into spermatozoa. May modulate the function of nicotinic acetylcholine receptors. This is Prostate and testis expressed protein 4 (Pate4) from Mus musculus (Mouse).